A 253-amino-acid chain; its full sequence is Ubiquinone biosynthesis O-methyltransferase (253 aa).

Arg47, Gly78, Asp99, and Met141 together coordinate S-adenosyl-L-methionine.

This sequence belongs to the methyltransferase superfamily. UbiG/COQ3 family.

It catalyses the reaction a 3-demethylubiquinol + S-adenosyl-L-methionine = a ubiquinol + S-adenosyl-L-homocysteine + H(+). The enzyme catalyses a 3-(all-trans-polyprenyl)benzene-1,2-diol + S-adenosyl-L-methionine = a 2-methoxy-6-(all-trans-polyprenyl)phenol + S-adenosyl-L-homocysteine + H(+). It participates in cofactor biosynthesis; ubiquinone biosynthesis. Its function is as follows. O-methyltransferase that catalyzes the 2 O-methylation steps in the ubiquinone biosynthetic pathway. The protein is Ubiquinone biosynthesis O-methyltransferase of Rhodopseudomonas palustris (strain ATCC BAA-98 / CGA009).